The primary structure comprises 689 residues: Polyribonucleotide nucleotidyltransferase (689 aa).

Residues aspartate 482 and aspartate 488 each contribute to the Mg(2+) site. Residues 549–608 form the KH domain; the sequence is PRMITLTIPQNKIGELIGPGGKNIRKIQEDNNVKIDIEETGRVFISGVESDGVKSAKEYV. The S1 motif domain maps to 618-686; it reads GKIYKSRVTK…KQGRINLSIK (69 aa).

The protein belongs to the polyribonucleotide nucleotidyltransferase family. Mg(2+) is required as a cofactor.

Its subcellular location is the cytoplasm. It carries out the reaction RNA(n+1) + phosphate = RNA(n) + a ribonucleoside 5'-diphosphate. Its function is as follows. Involved in mRNA degradation. Catalyzes the phosphorolysis of single-stranded polyribonucleotides processively in the 3'- to 5'-direction. The chain is Polyribonucleotide nucleotidyltransferase from Endomicrobium trichonymphae.